The primary structure comprises 189 residues: Adenylate kinase (189 aa).

11–16 (GSGKGT) is an ATP binding site. The NMP stretch occupies residues 31 to 60 (STGDVLRAEIKNGTELGKTAKGYIDQGQLI). AMP-binding positions include Thr32, Arg37, 58–60 (QLI), 86–89 (GFPR), and Gln93. The interval 127-137 (KRGKDSGRADD) is LID. Arg128 is a binding site for ATP. Residues Arg134 and Arg145 each coordinate AMP. Residue Gly173 participates in ATP binding.

The protein belongs to the adenylate kinase family. Monomer.

The protein resides in the cytoplasm. It catalyses the reaction AMP + ATP = 2 ADP. Its pathway is purine metabolism; AMP biosynthesis via salvage pathway; AMP from ADP: step 1/1. Its function is as follows. Catalyzes the reversible transfer of the terminal phosphate group between ATP and AMP. Plays an important role in cellular energy homeostasis and in adenine nucleotide metabolism. This Bacteroides thetaiotaomicron (strain ATCC 29148 / DSM 2079 / JCM 5827 / CCUG 10774 / NCTC 10582 / VPI-5482 / E50) protein is Adenylate kinase.